Here is a 726-residue protein sequence, read N- to C-terminus: Catalase-peroxidase (726 aa).

The N-terminal stretch at 1-16 is a signal peptide; it reads MDNPTDSAGKCPVAHG. The disordered stretch occupies residues 1-26; it reads MDNPTDSAGKCPVAHGNTPRSRSNRD. The segment at residues 96–218 is a cross-link (tryptophyl-tyrosyl-methioninium (Trp-Tyr) (with M-244)); it reads WHSAGTYRIT…LGAVQMGLIY (123 aa). H97 serves as the catalytic Proton acceptor. The tryptophyl-tyrosyl-methioninium (Tyr-Met) (with W-96) cross-link spans 218-244; that stretch reads YVNPEGPNGTPDPLASARDIRETFARM. H259 is a binding site for heme b.

It belongs to the peroxidase family. Peroxidase/catalase subfamily. As to quaternary structure, homodimer or homotetramer. Requires heme b as cofactor. In terms of processing, formation of the three residue Trp-Tyr-Met cross-link is important for the catalase, but not the peroxidase activity of the enzyme.

It carries out the reaction H2O2 + AH2 = A + 2 H2O. It catalyses the reaction 2 H2O2 = O2 + 2 H2O. Functionally, bifunctional enzyme with both catalase and broad-spectrum peroxidase activity. This chain is Catalase-peroxidase, found in Rhizobium johnstonii (strain DSM 114642 / LMG 32736 / 3841) (Rhizobium leguminosarum bv. viciae).